We begin with the raw amino-acid sequence, 358 residues long: Phosphate acyltransferase (358 aa).

This sequence belongs to the PlsX family. In terms of assembly, homodimer. Probably interacts with PlsY.

It localises to the cytoplasm. The catalysed reaction is a fatty acyl-[ACP] + phosphate = an acyl phosphate + holo-[ACP]. Its pathway is lipid metabolism; phospholipid metabolism. In terms of biological role, catalyzes the reversible formation of acyl-phosphate (acyl-PO(4)) from acyl-[acyl-carrier-protein] (acyl-ACP). This enzyme utilizes acyl-ACP as fatty acyl donor, but not acyl-CoA. This chain is Phosphate acyltransferase, found in Escherichia fergusonii (strain ATCC 35469 / DSM 13698 / CCUG 18766 / IAM 14443 / JCM 21226 / LMG 7866 / NBRC 102419 / NCTC 12128 / CDC 0568-73).